Here is a 228-residue protein sequence, read N- to C-terminus: NAD(P)H-hydrate epimerase (228 aa).

Residues Val-9–Ala-209 form the YjeF N-terminal domain. Asn-53–Asp-57 serves as a coordination point for (6S)-NADPHX. Residues Asn-54 and Asp-115 each coordinate K(+). Residues Gly-119–Pro-125 and Asp-148 each bind (6S)-NADPHX. A K(+)-binding site is contributed by Ser-151.

The protein belongs to the NnrE/AIBP family. K(+) serves as cofactor.

It carries out the reaction (6R)-NADHX = (6S)-NADHX. The catalysed reaction is (6R)-NADPHX = (6S)-NADPHX. Functionally, catalyzes the epimerization of the S- and R-forms of NAD(P)HX, a damaged form of NAD(P)H that is a result of enzymatic or heat-dependent hydration. This is a prerequisite for the S-specific NAD(P)H-hydrate dehydratase to allow the repair of both epimers of NAD(P)HX. The polypeptide is NAD(P)H-hydrate epimerase (Bordetella bronchiseptica (strain ATCC BAA-588 / NCTC 13252 / RB50) (Alcaligenes bronchisepticus)).